A 590-amino-acid chain; its full sequence is Laccase-19 (590 aa).

A signal peptide spans 1-28 (MEKLSMVTSLLCAITVAVLAVAVVSGEA). Plastocyanin-like domains lie at 36–152 (VVHE…PRDG) and 161–315 (KDVP…YAGT). Residues Asn-41 and Asn-47 are each glycosylated (N-linked (GlcNAc...) asparagine). 2 residues coordinate Cu cation: His-86 and His-88. A glycan (N-linked (GlcNAc...) asparagine) is linked at Asn-120. Residues His-131 and His-133 each coordinate Cu cation. N-linked (GlcNAc...) asparagine glycans are attached at residues Asn-205, Asn-344, Asn-378, Asn-397, Asn-434, and Asn-465. Residues 424-566 (DFPIRPPRPF…ATAFIVEDGP (143 aa)) enclose the Plastocyanin-like 3 domain. 8 residues coordinate Cu cation: Asn-483, His-486, His-488, His-545, Cys-546, His-547, His-551, and Met-556. The disordered stretch occupies residues 565–590 (GPTPETSLPPPPPEFKRCGNNGLSQP).

Belongs to the multicopper oxidase family. It depends on Cu cation as a cofactor.

It is found in the secreted. Its subcellular location is the extracellular space. The protein resides in the apoplast. The enzyme catalyses 4 hydroquinone + O2 = 4 benzosemiquinone + 2 H2O. In terms of biological role, lignin degradation and detoxification of lignin-derived products. The protein is Laccase-19 (LAC19) of Oryza sativa subsp. japonica (Rice).